The sequence spans 62 residues: Potassium channel toxin alpha-KTx 18.3 (62 aa).

An N-terminal signal peptide occupies residues 1 to 26 (MHFSGVAFILISMVLIGSIFETTVEA). Intrachain disulfides connect C34–C53, C39–C58, and C43–C60.

This sequence belongs to the short scorpion toxin superfamily. Potassium channel inhibitor family. Alpha-KTx 18 subfamily. In terms of tissue distribution, expressed by the venom gland.

It localises to the secreted. Functionally, probable voltage-gated potassium channel inhibitor. In Tityus discrepans (Venezuelan scorpion), this protein is Potassium channel toxin alpha-KTx 18.3.